Consider the following 224-residue polypeptide: V-type ATP synthase subunit D (224 aa).

The segment covering 205–214 (AKAKQQRKDI) has biased composition (basic and acidic residues). The disordered stretch occupies residues 205–224 (AKAKQQRKDIQSGNHGSAAD). Over residues 215 to 224 (QSGNHGSAAD) the composition is skewed to polar residues.

This sequence belongs to the V-ATPase D subunit family.

Its function is as follows. Produces ATP from ADP in the presence of a proton gradient across the membrane. The protein is V-type ATP synthase subunit D of Deinococcus deserti (strain DSM 17065 / CIP 109153 / LMG 22923 / VCD115).